A 353-amino-acid chain; its full sequence is Photosystem II D2 protein (353 aa).

Residue Thr-2 is modified to N-acetylthreonine. Thr-2 bears the Phosphothreonine mark. The chain crosses the membrane as a helical span at residues 41-61 (CAYFALGGWFTGTTFVTSWYT). Position 118 (His-118) interacts with chlorophyll a. Residues 125–141 (GFMLRQFELARSVQLRP) form a helical membrane-spanning segment. 2 residues coordinate pheophytin a: Gln-130 and Asn-143. Residues 153-166 (VFVSVFLIYPLGQS) form a helical membrane-spanning segment. Residue His-198 participates in chlorophyll a binding. A helical membrane pass occupies residues 208–228 (AALLCAIHGATVENTLFEDGD). 2 residues coordinate a plastoquinone: His-215 and Phe-262. Residue His-215 participates in Fe cation binding. His-269 is a binding site for Fe cation. Residues 279–295 (GLWMSALGVVGLALNLR) form a helical membrane-spanning segment.

The protein belongs to the reaction center PufL/M/PsbA/D family. In terms of assembly, PSII is composed of 1 copy each of membrane proteins PsbA, PsbB, PsbC, PsbD, PsbE, PsbF, PsbH, PsbI, PsbJ, PsbK, PsbL, PsbM, PsbT, PsbX, PsbY, PsbZ, Psb30/Ycf12, at least 3 peripheral proteins of the oxygen-evolving complex and a large number of cofactors. It forms dimeric complexes. The D1/D2 heterodimer binds P680, chlorophylls that are the primary electron donor of PSII, and subsequent electron acceptors. It shares a non-heme iron and each subunit binds pheophytin, quinone, additional chlorophylls, carotenoids and lipids. There is also a Cl(-1) ion associated with D1 and D2, which is required for oxygen evolution. The PSII complex binds additional chlorophylls, carotenoids and specific lipids. is required as a cofactor.

The protein localises to the plastid. It is found in the chloroplast thylakoid membrane. It catalyses the reaction 2 a plastoquinone + 4 hnu + 2 H2O = 2 a plastoquinol + O2. In terms of biological role, photosystem II (PSII) is a light-driven water:plastoquinone oxidoreductase that uses light energy to abstract electrons from H(2)O, generating O(2) and a proton gradient subsequently used for ATP formation. It consists of a core antenna complex that captures photons, and an electron transfer chain that converts photonic excitation into a charge separation. The D1/D2 (PsbA/PsbD) reaction center heterodimer binds P680, the primary electron donor of PSII as well as several subsequent electron acceptors. D2 is needed for assembly of a stable PSII complex. The polypeptide is Photosystem II D2 protein (Chloranthus spicatus (Chulantree)).